The chain runs to 217 residues: Pyridoxine/pyridoxamine 5'-phosphate oxidase (217 aa).

Substrate contacts are provided by residues 13 to 16 and Lys71; that span reads RREY. Residues 66–71, 81–82, Arg87, Lys88, and Gln110 contribute to the FMN site; these read RIVLLK and YT. Tyr128, Arg132, and Ser136 together coordinate substrate. Residues 145 to 146 and Trp190 each bind FMN; that span reads QS. Substrate is bound at residue 196–198; the sequence is RLH. An FMN-binding site is contributed by Arg200.

It belongs to the pyridoxamine 5'-phosphate oxidase family. Homodimer. Requires FMN as cofactor.

The catalysed reaction is pyridoxamine 5'-phosphate + O2 + H2O = pyridoxal 5'-phosphate + H2O2 + NH4(+). It catalyses the reaction pyridoxine 5'-phosphate + O2 = pyridoxal 5'-phosphate + H2O2. It participates in cofactor metabolism; pyridoxal 5'-phosphate salvage; pyridoxal 5'-phosphate from pyridoxamine 5'-phosphate: step 1/1. It functions in the pathway cofactor metabolism; pyridoxal 5'-phosphate salvage; pyridoxal 5'-phosphate from pyridoxine 5'-phosphate: step 1/1. Its function is as follows. Catalyzes the oxidation of either pyridoxine 5'-phosphate (PNP) or pyridoxamine 5'-phosphate (PMP) into pyridoxal 5'-phosphate (PLP). The chain is Pyridoxine/pyridoxamine 5'-phosphate oxidase from Photorhabdus laumondii subsp. laumondii (strain DSM 15139 / CIP 105565 / TT01) (Photorhabdus luminescens subsp. laumondii).